Consider the following 318-residue polypeptide: NADH-ubiquinone oxidoreductase chain 1 (318 aa).

Transmembrane regions (helical) follow at residues 2–22 (FLMN…FLTL), 37–57 (PNIV…KLFI), 69–89 (LMFT…WIPM), 100–120 (LGVL…LWSG), 136–156 (VAQT…IMMM), 171–191 (HMWL…STLA), 231–251 (IIMM…NPLF), 253–273 (ELFT…FLWV), and 293–313 (FLPL…LSAG).

It belongs to the complex I subunit 1 family. Core subunit of respiratory chain NADH dehydrogenase (Complex I) which is composed of 45 different subunits.

It is found in the mitochondrion inner membrane. The enzyme catalyses a ubiquinone + NADH + 5 H(+)(in) = a ubiquinol + NAD(+) + 4 H(+)(out). Its function is as follows. Core subunit of the mitochondrial membrane respiratory chain NADH dehydrogenase (Complex I) which catalyzes electron transfer from NADH through the respiratory chain, using ubiquinone as an electron acceptor. Essential for the catalytic activity and assembly of complex I. The chain is NADH-ubiquinone oxidoreductase chain 1 (MT-ND1) from Euphractus sexcinctus (Six-banded armadillo).